Consider the following 302-residue polypeptide: MKKNYRFSTALSQFSADSFRQGKSLRFPSPAKLNLFLYINGKRADGYHELQTLFQFLDYGDWLEISARADGEIHLTPQLPGVKEEDNLIYRAAHILQQNTGCTLGADIRLDKILPMGGGVGGGSSNAATVLVALNYLWKTRLSLSELADLGVKLGADVPIFIHGNAAFAEGVGEKLTDCEPPEKWFVVLKPETSISTALVFTHPDLPRNTPKRPLTRLLTEEYGNDCEKVVRNCYPEVEETLTWLLKYAPSRLTGTGACVFAEFDNEKSAQAVFDMKPASVSGFVAKGCNRSPLHQWLDKIS.

Lys-32 is a catalytic residue. 115-125 (PMGGGVGGGSS) contacts ATP. Residue Asp-157 is part of the active site.

It belongs to the GHMP kinase family. IspE subfamily.

The enzyme catalyses 4-CDP-2-C-methyl-D-erythritol + ATP = 4-CDP-2-C-methyl-D-erythritol 2-phosphate + ADP + H(+). It functions in the pathway isoprenoid biosynthesis; isopentenyl diphosphate biosynthesis via DXP pathway; isopentenyl diphosphate from 1-deoxy-D-xylulose 5-phosphate: step 3/6. Functionally, catalyzes the phosphorylation of the position 2 hydroxy group of 4-diphosphocytidyl-2C-methyl-D-erythritol. The polypeptide is 4-diphosphocytidyl-2-C-methyl-D-erythritol kinase (Actinobacillus succinogenes (strain ATCC 55618 / DSM 22257 / CCUG 43843 / 130Z)).